The chain runs to 142 residues: Large ribosomal subunit protein uL13 (142 aa).

Belongs to the universal ribosomal protein uL13 family. As to quaternary structure, part of the 50S ribosomal subunit.

Its function is as follows. This protein is one of the early assembly proteins of the 50S ribosomal subunit, although it is not seen to bind rRNA by itself. It is important during the early stages of 50S assembly. The sequence is that of Large ribosomal subunit protein uL13 from Hydrogenovibrio crunogenus (strain DSM 25203 / XCL-2) (Thiomicrospira crunogena).